We begin with the raw amino-acid sequence, 227 residues long: Probable septum site-determining protein MinC (227 aa).

It belongs to the MinC family. As to quaternary structure, interacts with MinD and FtsZ.

In terms of biological role, cell division inhibitor that blocks the formation of polar Z ring septums. Rapidly oscillates between the poles of the cell to destabilize FtsZ filaments that have formed before they mature into polar Z rings. Prevents FtsZ polymerization. In Geobacillus kaustophilus (strain HTA426), this protein is Probable septum site-determining protein MinC.